Consider the following 153-residue polypeptide: FAD synthase (153 aa).

ATP is bound by residues 9 to 10, 14 to 17, Asn92, and Tyr119; these read TF and HPGH.

It belongs to the archaeal FAD synthase family. Homodimer. It depends on a divalent metal cation as a cofactor.

The enzyme catalyses FMN + ATP + H(+) = FAD + diphosphate. It functions in the pathway cofactor biosynthesis; FAD biosynthesis; FAD from FMN: step 1/1. Catalyzes the transfer of the AMP portion of ATP to flavin mononucleotide (FMN) to produce flavin adenine dinucleotide (FAD) coenzyme. This is FAD synthase from Methanosphaerula palustris (strain ATCC BAA-1556 / DSM 19958 / E1-9c).